A 189-amino-acid polypeptide reads, in one-letter code: Cancer/testis antigen family 45 member A1 (189 aa).

Residues Met1–Asp23 show a composition bias toward basic and acidic residues. Disordered stretches follow at residues Met1–Tyr27 and Arg83–Ser118.

Belongs to the CT45 family. As to expression, testis specific. Expressed in cancer cell lines.

It is found in the nucleus. The polypeptide is Cancer/testis antigen family 45 member A1 (Homo sapiens (Human)).